A 206-amino-acid chain; its full sequence is Small ribosomal subunit protein uS4 (206 aa).

The S4 RNA-binding domain occupies 96–156; it reads GRLDNVVYRM…EKAKKQSRVK (61 aa).

Belongs to the universal ribosomal protein uS4 family. Part of the 30S ribosomal subunit. Contacts protein S5. The interaction surface between S4 and S5 is involved in control of translational fidelity.

Its function is as follows. One of the primary rRNA binding proteins, it binds directly to 16S rRNA where it nucleates assembly of the body of the 30S subunit. In terms of biological role, with S5 and S12 plays an important role in translational accuracy. This Serratia proteamaculans (strain 568) protein is Small ribosomal subunit protein uS4.